A 160-amino-acid polypeptide reads, in one-letter code: Arginine repressor (160 aa).

The protein belongs to the ArgR family.

It is found in the cytoplasm. It functions in the pathway amino-acid biosynthesis; L-arginine biosynthesis [regulation]. Functionally, regulates arginine biosynthesis genes. The polypeptide is Arginine repressor (Anaeromyxobacter sp. (strain K)).